Here is a 142-residue protein sequence, read N- to C-terminus: Ribosome-binding factor A (142 aa).

Positions 120 to 130 are enriched in basic and acidic residues; that stretch reads EVRRDIDHAPA. Residues 120 to 142 form a disordered region; the sequence is EVRRDIDHAPAEDEFPTDGDDGQ. Acidic residues predominate over residues 131 to 142; the sequence is EDEFPTDGDDGQ.

The protein belongs to the RbfA family. Monomer. Binds 30S ribosomal subunits, but not 50S ribosomal subunits or 70S ribosomes.

It localises to the cytoplasm. In terms of biological role, one of several proteins that assist in the late maturation steps of the functional core of the 30S ribosomal subunit. Associates with free 30S ribosomal subunits (but not with 30S subunits that are part of 70S ribosomes or polysomes). Required for efficient processing of 16S rRNA. May interact with the 5'-terminal helix region of 16S rRNA. This Paramagnetospirillum magneticum (strain ATCC 700264 / AMB-1) (Magnetospirillum magneticum) protein is Ribosome-binding factor A.